The primary structure comprises 275 residues: Elongation factor Ts (275 aa).

Lys-36 is covalently cross-linked (Isoglutamyl lysine isopeptide (Lys-Gln) (interchain with Q-Cter in protein Pup)). An involved in Mg(2+) ion dislocation from EF-Tu region spans residues 76 to 79; it reads TDFV.

This sequence belongs to the EF-Ts family.

It is found in the cytoplasm. In terms of biological role, associates with the EF-Tu.GDP complex and induces the exchange of GDP to GTP. It remains bound to the aminoacyl-tRNA.EF-Tu.GTP complex up to the GTP hydrolysis stage on the ribosome. This is Elongation factor Ts from Mycolicibacterium smegmatis (strain ATCC 700084 / mc(2)155) (Mycobacterium smegmatis).